The sequence spans 361 residues: Inhibin alpha chain (361 aa).

The N-terminal stretch at 1–21 is a signal peptide; sequence MLPLLLPLQLLLLMVMKGGHG. A propeptide spanning residues 22 to 64 is cleaved from the precursor; the sequence is CQGPELDRELVLAKVRALVLDALGPPNASKDGGKPVAQRLTRR. The segment at 45 to 82 is disordered; that stretch reads GPPNASKDGGKPVAQRLTRRHAHTGGSTRRSMENEDED. Asn-48, Asn-144, and Asn-266 each carry an N-linked (GlcNAc...) asparagine glycan. Residues 65–230 constitute a propeptide, inhibin alpha N-terminal region; the sequence is HAHTGGSTRR…PPSVGERARR (166 aa). 3 disulfides stabilise this stretch: Cys-260–Cys-323, Cys-289–Cys-358, and Cys-293–Cys-360.

The protein belongs to the TGF-beta family. Dimeric, linked by one or more disulfide bonds. Activin B is a dimer of alpha and beta-B. Inhibin A is a dimer of alpha and beta-A. Inhibin B is a dimer of alpha and beta-B. Interacts with TGFBR3L; this interaction regulates female fertility. Post-translationally, proteolytic processing yields a number of bioactive forms, consisting either solely of the mature alpha chain, of the most N-terminal propeptide linked through a disulfide bond to the mature alpha chain, or of the entire proprotein.

The protein resides in the secreted. Its function is as follows. Inhibins and activins inhibit and activate, respectively, the secretion of follitropin by the pituitary gland. Inhibins/activins are involved in regulating a number of diverse functions such as hypothalamic and pituitary hormone secretion, gonadal hormone secretion, germ cell development and maturation, erythroid differentiation, insulin secretion, nerve cell survival, embryonic axial development or bone growth, depending on their subunit composition. Inhibins appear to oppose the functions of activins. Inhibin A is a dimer of alpha/INHA and beta-A/INHBA that functions as a feedback regulator in the hypothalamic-pituitary-gonadal (HPG) axis. Inhibits the secretion of FSH from the anterior pituitary gland by acting on pituitary gonadotrope cells. Antagonizes activin A by binding to the proteoglycan, betaglycan, and forming a stable complex with and, thereby, sequestering type II activin receptors while excluding type I receptor. Functionally, inhibin B is a dimer of alpha and beta-B that plays a crucial role in the regulation of the reproductive system by inhibiting the secretion of follicle-stimulating hormone (FSH) from the anterior pituitary gland. Thereby, maintains reproductive homeostasis in both males and females. Acts as a more potent suppressor of FSH release than inhibin A. Functions as competitive receptor antagonist binding activin type II receptors with high affinity in the presence of the TGF-beta type III coreceptor/TGFBR3L. This is Inhibin alpha chain (INHA) from Trichosurus vulpecula (Brush-tailed possum).